A 611-amino-acid polypeptide reads, in one-letter code: Probable inactive purple acid phosphatase 27 (611 aa).

The signal sequence occupies residues 1 to 18 (MARNFLLVLLWFIVQVSS). 2 N-linked (GlcNAc...) asparagine glycosylation sites follow: Asn-263 and Asn-271. A Fe cation-binding site is contributed by Asp-293. An N-linked (GlcNAc...) asparagine glycan is attached at Asn-314. The Fe cation site is built by Asp-334 and Tyr-337. Asp-334 is a binding site for Zn(2+). Zn(2+) is bound by residues Asn-367, His-456, and His-498. Residue Asn-367 coordinates substrate. 498-500 (HVH) contributes to the substrate binding site. His-500 is a binding site for Fe cation.

This sequence belongs to the metallophosphoesterase superfamily. Purple acid phosphatase family. Homodimer. It depends on Fe cation as a cofactor. Requires Zn(2+) as cofactor. As to expression, expressed in roots, stems, leaves, flowers and siliques.

The protein resides in the secreted. The chain is Probable inactive purple acid phosphatase 27 (PAP27) from Arabidopsis thaliana (Mouse-ear cress).